The primary structure comprises 430 residues: Adenylosuccinate synthetase (430 aa).

GTP is bound by residues 13-19 and 41-43; these read GDEGKGK and GHT. Asp-14 acts as the Proton acceptor in catalysis. Positions 14 and 41 each coordinate Mg(2+). IMP-binding positions include 14-17, 39-42, Thr-130, Arg-144, Gln-225, Thr-240, and Arg-304; these read DEGK and NAGH. His-42 serves as the catalytic Proton donor. 300-306 serves as a coordination point for substrate; the sequence is ASTGRPR. Residues Arg-306, 332 to 334, and 414 to 416 each bind GTP; these read KLD and STG.

It belongs to the adenylosuccinate synthetase family. In terms of assembly, homodimer. It depends on Mg(2+) as a cofactor.

The protein resides in the cytoplasm. The enzyme catalyses IMP + L-aspartate + GTP = N(6)-(1,2-dicarboxyethyl)-AMP + GDP + phosphate + 2 H(+). It functions in the pathway purine metabolism; AMP biosynthesis via de novo pathway; AMP from IMP: step 1/2. Plays an important role in the de novo pathway of purine nucleotide biosynthesis. Catalyzes the first committed step in the biosynthesis of AMP from IMP. The polypeptide is Adenylosuccinate synthetase (Xylella fastidiosa (strain M23)).